A 92-amino-acid polypeptide reads, in one-letter code: UPF0250 protein XF_1271 (92 aa).

The protein belongs to the UPF0250 family.

This chain is UPF0250 protein XF_1271, found in Xylella fastidiosa (strain 9a5c).